Here is a 698-residue protein sequence, read N- to C-terminus: Elongation factor G 1 (698 aa).

The tr-type G domain maps to 8–290; sequence ERYRNIGICA…AVIEFLPAPV (283 aa). Residues 17–24, 88–92, and 142–145 each bind GTP; these read AHVDAGKT, DTPGH, and NKMD.

Belongs to the TRAFAC class translation factor GTPase superfamily. Classic translation factor GTPase family. EF-G/EF-2 subfamily.

It localises to the cytoplasm. Catalyzes the GTP-dependent ribosomal translocation step during translation elongation. During this step, the ribosome changes from the pre-translocational (PRE) to the post-translocational (POST) state as the newly formed A-site-bound peptidyl-tRNA and P-site-bound deacylated tRNA move to the P and E sites, respectively. Catalyzes the coordinated movement of the two tRNA molecules, the mRNA and conformational changes in the ribosome. This Aliivibrio fischeri (strain ATCC 700601 / ES114) (Vibrio fischeri) protein is Elongation factor G 1.